We begin with the raw amino-acid sequence, 75 residues long: DNA-directed RNA polymerase subunit omega (75 aa).

It belongs to the RNA polymerase subunit omega family. In cyanobacteria the RNAP catalytic core is composed of 2 alpha, 1 beta, 1 beta', 1 gamma and 1 omega subunit. When a sigma factor is associated with the core the holoenzyme is formed, which can initiate transcription.

The enzyme catalyses RNA(n) + a ribonucleoside 5'-triphosphate = RNA(n+1) + diphosphate. Promotes RNA polymerase assembly. Latches the N- and C-terminal regions of the beta' subunit thereby facilitating its interaction with the beta and alpha subunits. The protein is DNA-directed RNA polymerase subunit omega of Parasynechococcus marenigrum (strain WH8102).